A 325-amino-acid polypeptide reads, in one-letter code: UDP-N-acetylglucosamine transporter ROCK1 (325 aa).

At 1–13 the chain is on the cytoplasmic side; sequence MATANGAKSPSSM. Residues 14–34 form a helical membrane-spanning segment; that stretch reads GPKVLFYSILLTLQYGAQPLI. The Lumenal segment spans residues 35-42; that stretch reads SKRCIRKD. A helical transmembrane segment spans residues 43-63; it reads VIVTSSVLTCEIVKVICALIL. The Cytoplasmic portion of the chain corresponds to 64–109; that stretch reads MARNGSLKGLAKEWTLMGSLTASGLPAAIYALQNSLLQISYRSLDS. Residues 110 to 130 traverse the membrane as a helical segment; it reads LTFSILNQTKIFFTAFFTFII. The Lumenal segment spans residues 131 to 135; sequence LRQKQ. The helical transmembrane segment at 136–156 threads the bilayer; it reads SILQIGALCLLIMAAVLLSVG. Topologically, residues 157 to 171 are cytoplasmic; the sequence is EGSNKDSSGINADQK. A helical membrane pass occupies residues 172 to 192; it reads LFYGIIPVLAASVLSGLASSL. The Lumenal segment spans residues 193–203; sequence CQWASQVKKHS. A helical transmembrane segment spans residues 204-224; sequence SYLMTVEMSIVGSLCLLVSTL. Over 225–241 the chain is Cytoplasmic; sequence KSPDGEAIKKYGFFHGW. A helical transmembrane segment spans residues 242–262; the sequence is TALTLVPVISNALGGILVGLV. Topologically, residues 263–270 are lumenal; it reads TSHAGGVR. A helical transmembrane segment spans residues 271 to 291; it reads KGFVIVSALLVTALLQFAFEG. Residues 292–325 lie on the Cytoplasmic side of the membrane; sequence KPPSSYCLVALPLVMSSISMYQKYPYIDKKKKKV.

The protein belongs to the nucleotide-sugar transporter family. CMP-Sialate:CMP antiporter (TC 2.A.7.12) subfamily. As to expression, expressed in roots, cotyledons, leaves, stems, flowers and siliques.

The protein resides in the endoplasmic reticulum membrane. Functionally, mediates the transport of UDP-linked acetylated hexosamines across the endoplasmic reticulum (ER) membrane. Facilitates UDP-N-acetylglucosamine (UDP-GlcNAc) and UDP-N-acetylgalactosamine (UDP-GalNAc) transport. Regulates the cytokinin signal in meristematic cells through modulating activity of cytokinin oxidases/dehydrogenases. Part of the ER quality control system, which determines the fate of aberrant proteins in the secretory pathway. The protein is UDP-N-acetylglucosamine transporter ROCK1 of Arabidopsis thaliana (Mouse-ear cress).